Reading from the N-terminus, the 201-residue chain is Mediator of RNA polymerase II transcription subunit 19 (201 aa).

The disordered stretch occupies residues 166 to 201 (GTGKSNAKKRKNRSNGSSMATPNSEMQDDVKRRRLE).

This sequence belongs to the Mediator complex subunit 19 family. Component of the Mediator complex.

Its subcellular location is the nucleus. Functionally, component of the Mediator complex, a coactivator involved in the regulated transcription of nearly all RNA polymerase II-dependent genes. Mediator functions as a bridge to convey information from gene-specific regulatory proteins to the basal RNA polymerase II transcription machinery. Mediator is recruited to promoters by direct interactions with regulatory proteins and serves as a scaffold for the assembly of a functional preinitiation complex with RNA polymerase II and the general transcription factors. The protein is Mediator of RNA polymerase II transcription subunit 19 (ROX3) of Candida glabrata (strain ATCC 2001 / BCRC 20586 / JCM 3761 / NBRC 0622 / NRRL Y-65 / CBS 138) (Yeast).